The chain runs to 300 residues: N-carbamoylputrescine amidase (300 aa).

The CN hydrolase domain maps to 8–266; the sequence is VTVAALQFAC…EAVLVAQFDL (259 aa). E47 (proton acceptor) is an active-site residue. K120 functions as the Proton donor in the catalytic mechanism. C157 (nucleophile) is an active-site residue.

This sequence belongs to the carbon-nitrogen hydrolase superfamily. In terms of assembly, homooctamer.

The catalysed reaction is N-carbamoylputrescine + H2O + 2 H(+) = putrescine + NH4(+) + CO2. It functions in the pathway amine and polyamine biosynthesis; putrescine biosynthesis via agmatine pathway; putrescine from N-carbamoylputrescine (amidase route): step 1/1. Its function is as follows. Involved in polyamine biosynthesis. This chain is N-carbamoylputrescine amidase (CPA), found in Solanum lycopersicum (Tomato).